Consider the following 519-residue polypeptide: MFLLPLPAAARVAVRHLSVKRLWAPGPAAADMTKGLVLGIYSKEKEEDEPQFTSAGENFNKLVSGKLREILNISGPPLKAGKTRTFYGLHEDFPSVVVVGLGKKTAGIDEQENWHEGKENIRAAVAAGCRQIQDLEIPSVEVDPCGDAQAAAEGAVLGLYEYDDLKQKRKVVVSAKLHGSEDQEAWQRGVLFASGQNLARRLMETPANEMTPTKFAEIVEENLKSASIKTDVFIRPKSWIEEQEMGSFLSVAKGSEEPPVFLEIHYKGSPNASEPPLVFVGKGITFDSGGISIKAAANMDLMRADMGGAATICSAIVSAAKLDLPINIVGLAPLCENMPSGKANKPGDVVRARNGKTIQVDNTDAEGRLILADALCYAHTFNPKVIINAATLTGAMDIALGSGATGVFTNSSWLWNKLFEASIETGDRVWRMPLFEHYTRQVIDCQLADVNNIGKYRSAGACTAAAFLKEFVTHPKWAHLDIAGVMTNKDEVPYLRKGMAGRPTRTLIEFLFRFSQDSA.

Phosphoserine is present on Ser-42. Lys-45 is modified (N6-succinyllysine). Ser-54 is modified (phosphoserine). An N6-succinyllysine mark is found at Lys-61 and Lys-103. Phosphoserine occurs at positions 180 and 194. Positions 202, 203, and 205 each coordinate Zn(2+). The residue at position 238 (Ser-238) is a Phosphoserine. Zn(2+)-binding residues include Lys-282 and Asp-287. Residues Lys-282, Asp-287, Ser-292, and Lys-294 each contribute to the substrate site. Asp-287 serves as a coordination point for Mg(2+). Lys-294 is an active-site residue. The Zn(2+) site is built by Arg-303, Asp-305, Asp-364, and Glu-366. Positions 305 and 364 each coordinate substrate. Asp-364 and Glu-366 together coordinate Mg(2+). Arg-368 is a catalytic residue. Position 455 is an N6-acetyllysine; alternate (Lys-455). N6-succinyllysine; alternate is present on Lys-455. Position 476 is an N6-succinyllysine (Lys-476). At Lys-489 the chain carries N6-acetyllysine; alternate. The residue at position 489 (Lys-489) is an N6-succinyllysine; alternate.

The protein belongs to the peptidase M17 family. As to quaternary structure, homohexamer. The cofactor is Zn(2+). Mn(2+) is required as a cofactor.

The protein resides in the cytoplasm. The catalysed reaction is Release of an N-terminal amino acid, Xaa-|-Yaa-, in which Xaa is preferably Leu, but may be other amino acids including Pro although not Arg or Lys, and Yaa may be Pro. Amino acid amides and methyl esters are also readily hydrolyzed, but rates on arylamides are exceedingly low.. It catalyses the reaction an S-substituted L-cysteinylglycine + H2O = an S-substituted L-cysteine + glycine. The enzyme catalyses L-cysteinylglycine + H2O = L-cysteine + glycine. It carries out the reaction S-benzyl-L-cysteinylglycine + H2O = S-benzyl-L-cysteine + glycine. The catalysed reaction is Release of N-terminal proline from a peptide.. Zofenoprilat inhibits Cys-Gly hydrolysis activity. Functionally, cytosolic metallopeptidase that catalyzes the removal of unsubstituted N-terminal hydrophobic amino acids from various peptides. The presence of Zn(2+) ions is essential for the peptidase activity, and the association with other cofactors can modulate the substrate spectificity of the enzyme. For instance, in the presence of Mn(2+), it displays a specific Cys-Gly hydrolyzing activity of Cys-Gly-S-conjugates. Involved in the metabolism of glutathione and in the degradation of glutathione S-conjugates, which may play a role in the control of the cell redox status. The chain is Cytosol aminopeptidase from Bos taurus (Bovine).